A 214-amino-acid polypeptide reads, in one-letter code: Thymidylate kinase (214 aa).

7–14 (GIDGAGKS) provides a ligand contact to ATP.

This sequence belongs to the thymidylate kinase family.

It carries out the reaction dTMP + ATP = dTDP + ADP. Its function is as follows. Phosphorylation of dTMP to form dTDP in both de novo and salvage pathways of dTTP synthesis. This chain is Thymidylate kinase, found in Chlorobaculum tepidum (strain ATCC 49652 / DSM 12025 / NBRC 103806 / TLS) (Chlorobium tepidum).